The primary structure comprises 158 residues: Glutathione peroxidase homolog BsaA (158 aa).

The active site involves Thr36.

It belongs to the glutathione peroxidase family.

The protein is Glutathione peroxidase homolog BsaA (bsaA) of Staphylococcus epidermidis (strain ATCC 35984 / DSM 28319 / BCRC 17069 / CCUG 31568 / BM 3577 / RP62A).